We begin with the raw amino-acid sequence, 128 residues long: MTPWSLPQFAFHLVTFLSIAFIASIFVLPFLTFSFVLSSATVGLSFASRTSFEIGLFFYDRFVILLQGQLRGMIDQLPSNQPAKEEKKVKAQQQGDELFTQQEQAAPSQTLGSTIPLQSIEESLLDST.

Over 1 to 8 (MTPWSLPQ) the chain is Cytoplasmic. A helical membrane pass occupies residues 9 to 28 (FAFHLVTFLSIAFIASIFVL). The Extracellular portion of the chain corresponds to 29 to 34 (PFLTFS). Residues 35 to 59 (FVLSSATVGLSFASRTSFEIGLFFY) form a helical membrane-spanning segment. The Cytoplasmic segment spans residues 60-128 (DRFVILLQGQ…SIEESLLDST (69 aa)).

Belongs to the OSW5 family.

It localises to the membrane. Functionally, involved in spore wall assembly. This Kluyveromyces lactis (strain ATCC 8585 / CBS 2359 / DSM 70799 / NBRC 1267 / NRRL Y-1140 / WM37) (Yeast) protein is Outer spore wall protein 5 (OSW5).